A 1700-amino-acid chain; its full sequence is uncharacterized protein (1700 aa).

The chain crosses the membrane as a helical span at residues 986–1006; that stretch reads APITQYPVLCYLLYLLSYYLV. Coiled-coil stretches lie at residues 1246-1278 and 1657-1684; these read DQNA…REIK and QDMD…IEGD. The disordered stretch occupies residues 1650 to 1700; that stretch reads DTEPDIMQDMDGEPQEADELEDLKEEAESLDIEGDYFAEEDEDYAQEDFIE. Acidic residues predominate over residues 1651–1700; the sequence is TEPDIMQDMDGEPQEADELEDLKEEAESLDIEGDYFAEEDEDYAQEDFIE.

It is found in the host membrane. The protein resides in the virion. This is an uncharacterized protein from Acanthamoeba polyphaga (Amoeba).